Reading from the N-terminus, the 370-residue chain is Anthranilate phosphoribosyltransferase (370 aa).

The interval 1 to 27 (MALSAEGSSGGSRGGSPKAEAASVPSW) is disordered. 5-phospho-alpha-D-ribose 1-diphosphate contacts are provided by residues glycine 107, 110 to 111 (GD), threonine 115, 117 to 120 (NLST), 135 to 143 (KHGNRAASS), and glycine 147. Glycine 107 serves as a coordination point for anthranilate. Serine 119 is a binding site for Mg(2+). An anthranilate-binding site is contributed by asparagine 138. Anthranilate is bound at residue arginine 193. The Mg(2+) site is built by aspartate 251 and glutamate 252.

The protein belongs to the anthranilate phosphoribosyltransferase family. In terms of assembly, homodimer. Mg(2+) is required as a cofactor.

It catalyses the reaction N-(5-phospho-beta-D-ribosyl)anthranilate + diphosphate = 5-phospho-alpha-D-ribose 1-diphosphate + anthranilate. The protein operates within amino-acid biosynthesis; L-tryptophan biosynthesis; L-tryptophan from chorismate: step 2/5. Its function is as follows. Catalyzes the transfer of the phosphoribosyl group of 5-phosphorylribose-1-pyrophosphate (PRPP) to anthranilate to yield N-(5'-phosphoribosyl)-anthranilate (PRA). This chain is Anthranilate phosphoribosyltransferase, found in Mycobacterium bovis (strain ATCC BAA-935 / AF2122/97).